Here is a 1138-residue protein sequence, read N- to C-terminus: uncharacterized protein (1138 aa).

2 disordered regions span residues 985–1015 (EKKL…MAQE) and 1094–1138 (LVAT…QNKL). Residues 1110-1138 (DDDEYEKYDSGIEDIETDVDEEEEVQNKL) are compositionally biased toward acidic residues.

This is an uncharacterized protein from Ostreid herpesvirus 1 (isolate France) (OsHV-1).